A 234-amino-acid polypeptide reads, in one-letter code: Small ribosomal subunit protein uS3 (234 aa).

Residues 39–107 (VRDYLKKKLS…PVHVNIEEVR (69 aa)) enclose the KH type-2 domain. A disordered region spans residues 212–234 (EQPAAAEQEKRGKKSGVKHAAAS).

This sequence belongs to the universal ribosomal protein uS3 family. As to quaternary structure, part of the 30S ribosomal subunit. Forms a tight complex with proteins S10 and S14.

Binds the lower part of the 30S subunit head. Binds mRNA in the 70S ribosome, positioning it for translation. In Thiobacillus denitrificans (strain ATCC 25259 / T1), this protein is Small ribosomal subunit protein uS3.